A 28-amino-acid chain; its full sequence is 14-3-3-like protein 4 (28 aa).

This sequence belongs to the 14-3-3 family.

The polypeptide is 14-3-3-like protein 4 (Pseudotsuga menziesii (Douglas-fir)).